Reading from the N-terminus, the 363-residue chain is Class I histocompatibility antigen, Gogo-B*0201 alpha chain (363 aa).

A signal peptide spans 1–24 (MQVTAPRTLLLLLSAALALTETWA). An alpha-1 region spans residues 25-114 (GSHSMRYFHT…LRGYYNQSED (90 aa)). The Extracellular segment spans residues 25-308 (GSHSMRYFHT…EPSSQSTIPI (284 aa)). Asn-110 is a glycosylation site (N-linked (GlcNAc...) asparagine). Residues 115 to 206 (GSHTIQRMYG…ENGKETLQRA (92 aa)) are alpha-2. 2 disulfide bridges follow: Cys-125-Cys-188 and Cys-227-Cys-283. The segment at 207 to 298 (DPPKTHVTHH…GLPEPLTLRW (92 aa)) is alpha-3. Residues 209–297 (PKTHVTHHPI…EGLPEPLTLR (89 aa)) enclose the Ig-like C1-type domain. Residues 299–308 (EPSSQSTIPI) are connecting peptide. The helical transmembrane segment at 309–333 (VGIVAGLAVLVVTVAVVAVVAAVMC) threads the bilayer. Residues 334–363 (RRKSSGGKGGSYSQAASSDSAQGSDVSLTA) are Cytoplasmic-facing. The segment at 336 to 363 (KSSGGKGGSYSQAASSDSAQGSDVSLTA) is disordered. Over residues 344-363 (SYSQAASSDSAQGSDVSLTA) the composition is skewed to low complexity.

This sequence belongs to the MHC class I family. In terms of assembly, heterodimer of an alpha chain and a beta chain (beta-2-microglobulin).

The protein resides in the membrane. Involved in the presentation of foreign antigens to the immune system. This chain is Class I histocompatibility antigen, Gogo-B*0201 alpha chain, found in Gorilla gorilla gorilla (Western lowland gorilla).